Reading from the N-terminus, the 273-residue chain is Large ribosomal subunit protein uL2 (273 aa).

The interval 223–273 (VVMNPVDHPMGGGEGRSSGGRHPCTPWGVPTKGHKTRSNKSTDKYIVKRRG) is disordered. Residues 262–273 (KSTDKYIVKRRG) are compositionally biased toward basic and acidic residues.

The protein belongs to the universal ribosomal protein uL2 family. In terms of assembly, part of the 50S ribosomal subunit. Forms a bridge to the 30S subunit in the 70S ribosome.

In terms of biological role, one of the primary rRNA binding proteins. Required for association of the 30S and 50S subunits to form the 70S ribosome, for tRNA binding and peptide bond formation. It has been suggested to have peptidyltransferase activity; this is somewhat controversial. Makes several contacts with the 16S rRNA in the 70S ribosome. The protein is Large ribosomal subunit protein uL2 of Syntrophus aciditrophicus (strain SB).